Reading from the N-terminus, the 142-residue chain is Large ribosomal subunit protein uL13 (142 aa).

Belongs to the universal ribosomal protein uL13 family. As to quaternary structure, part of the 50S ribosomal subunit.

This protein is one of the early assembly proteins of the 50S ribosomal subunit, although it is not seen to bind rRNA by itself. It is important during the early stages of 50S assembly. The polypeptide is Large ribosomal subunit protein uL13 (Pelobacter propionicus (strain DSM 2379 / NBRC 103807 / OttBd1)).